We begin with the raw amino-acid sequence, 87 residues long: Large ribosomal subunit protein bL31B (87 aa).

It belongs to the bacterial ribosomal protein bL31 family. Type B subfamily. In terms of assembly, part of the 50S ribosomal subunit.

This is Large ribosomal subunit protein bL31B from Salinispora arenicola (strain CNS-205).